The sequence spans 1080 residues: uncharacterized protein (1080 aa).

A signal peptide spans 1–17 (MHKLLVIIAHIIVCAYA). Over 18–1042 (DFTGFDNEAG…KSLDLEMIGK (1025 aa)) the chain is Extracellular. Residues asparagine 439, asparagine 664, and asparagine 875 are each glycosylated (N-linked (GlcNAc...) asparagine; by host). A helical membrane pass occupies residues 1043–1063 (IILLIAFVIVFVILLTIGIIT). Over 1064–1080 (LVKRHRETLPEDEYLLP) the chain is Cytoplasmic.

It is found in the host membrane. This is an uncharacterized protein from Ostreid herpesvirus 1 (isolate France) (OsHV-1).